A 783-amino-acid chain; its full sequence is Endonuclease MutS2 (783 aa).

ATP is bound at residue 328 to 335 (GPNTGGKT). Positions 708–783 (LDLRGKRYEE…GSGCTIATLG (76 aa)) constitute a Smr domain.

The protein belongs to the DNA mismatch repair MutS family. MutS2 subfamily. Homodimer. Binds to stalled ribosomes, contacting rRNA.

Its function is as follows. Endonuclease that is involved in the suppression of homologous recombination and thus may have a key role in the control of bacterial genetic diversity. Acts as a ribosome collision sensor, splitting the ribosome into its 2 subunits. Detects stalled/collided 70S ribosomes which it binds and splits by an ATP-hydrolysis driven conformational change. Acts upstream of the ribosome quality control system (RQC), a ribosome-associated complex that mediates the extraction of incompletely synthesized nascent chains from stalled ribosomes and their subsequent degradation. Probably generates substrates for RQC. The polypeptide is Endonuclease MutS2 (Streptococcus thermophilus (strain CNRZ 1066)).